A 688-amino-acid chain; its full sequence is MFKKLFGQLQRIGKALMLPVAILPAAGILLAFGNAMHNEQLVEIAPWLKNDIIVMISSVMEAAGQVVFDNLPLLFAVGTALGLAGGDGVAALAALVGYLIMNATMGKVLHITIDDIFSYAKGAKELSQAAKEPAHALVLGIPTLQTGVFGGIIMGALAAWCYNKFYNITLPPFLGFFAGKRFVPIVTSVVAIATGVLLSFAWPPIQDGLNSLSNFLLNKNLTLTTFIFGIIERSLIPFGLHHIFYSPFWFEFGSYTNHAGELVRGDQRIWMAQLKDGVPFTAGAFTTGKYPFMMFGLPAAAFAIYKNARPERKKVVGGLMLSAGLTAFLTGITEPLEFSFLFVAPVLYGIHVLLAGTSFLVMHLLGVKIGMTFSGGFIDYILYGLLNWDRSHALLVIPVGIVYAIVYYFLFDFAIRKFKLKTPGREDEETEIRNSSVAKLPFDVLDAMGGKENIKHLDACITRLRVEVVDKSKVDVAGIKALGASGVLEVGNNMQAIFGPKSDQIKHDMAKIMSGEITKPSETTVTEEMSDEPVHVEALGTTDIYAPGVGQIIPLSEVPDQVFAGKMMGDGIGFIPEKGEIVAPFDGTVKTIFPTKHAIGLESESGVEVLIHIGIDTVKLNGEGFESLINVDEKVTQGQPLMKVNLAYLKAHAPSIVTPMIITNLENKELVIEDVQDADPGKLIMTVK.

The PTS EIIC type-1 domain occupies Lys-3–Asp-427. 10 helical membrane-spanning segments follow: residues Ile-12–Phe-32, Leu-81–Met-101, Leu-137–Leu-157, Phe-182–Trp-202, Leu-223–Ile-243, Ala-284–Ile-304, Val-315–Pro-335, Phe-340–Leu-360, Leu-364–Gly-384, and Leu-395–Ile-415. The PTS EIIB type-1 domain occupies Ala-438–Lys-519. The active-site Phosphocysteine intermediate; for EIIB activity is Cys-460. The 105-residue stretch at Asp-560–Asn-664 folds into the PTS EIIA type-1 domain. The active-site Tele-phosphohistidine intermediate; for EIIA activity is His-612.

The protein resides in the cell membrane. Its function is as follows. The phosphoenolpyruvate-dependent sugar phosphotransferase system (sugar PTS), a major carbohydrate active -transport system, catalyzes the phosphorylation of incoming sugar substrates concomitantly with their translocation across the cell membrane. This system is involved in alpha- and beta-glucoside transport. This Staphylococcus aureus (strain JH1) protein is PTS system glucoside-specific EIICBA component (glcB).